The following is a 67-amino-acid chain: ATP synthase F(0) complex subunit 8 (67 aa).

Residues 8 to 24 form a helical membrane-spanning segment; it reads TWFITITSMIMTLFILF. Position 54 is an N6-acetyllysine; alternate (K54). K54 carries the N6-succinyllysine; alternate modification. K57 bears the N6-acetyllysine mark.

Belongs to the ATPase protein 8 family. Component of the ATP synthase complex composed at least of ATP5F1A/subunit alpha, ATP5F1B/subunit beta, ATP5MC1/subunit c (homooctomer), MT-ATP6/subunit a, MT-ATP8/subunit 8, ATP5ME/subunit e, ATP5MF/subunit f, ATP5MG/subunit g, ATP5MK/subunit k, ATP5MJ/subunit j, ATP5F1C/subunit gamma, ATP5F1D/subunit delta, ATP5F1E/subunit epsilon, ATP5PF/subunit F6, ATP5PB/subunit b, ATP5PD/subunit d, ATP5PO/subunit OSCP. ATP synthase complex consists of a soluble F(1) head domain (subunits alpha(3) and beta(3)) - the catalytic core - and a membrane F(0) domain - the membrane proton channel (subunits c, a, 8, e, f, g, k and j). These two domains are linked by a central stalk (subunits gamma, delta, and epsilon) rotating inside the F1 region and a stationary peripheral stalk (subunits F6, b, d, and OSCP). Interacts with PRICKLE3.

The protein resides in the mitochondrion membrane. Its function is as follows. Subunit 8, of the mitochondrial membrane ATP synthase complex (F(1)F(0) ATP synthase or Complex V) that produces ATP from ADP in the presence of a proton gradient across the membrane which is generated by electron transport complexes of the respiratory chain. ATP synthase complex consist of a soluble F(1) head domain - the catalytic core - and a membrane F(1) domain - the membrane proton channel. These two domains are linked by a central stalk rotating inside the F(1) region and a stationary peripheral stalk. During catalysis, ATP synthesis in the catalytic domain of F(1) is coupled via a rotary mechanism of the central stalk subunits to proton translocation. In vivo, can only synthesize ATP although its ATP hydrolase activity can be activated artificially in vitro. Part of the complex F(0) domain. The polypeptide is ATP synthase F(0) complex subunit 8 (Sus scrofa (Pig)).